A 272-amino-acid polypeptide reads, in one-letter code: Putative phosphoenolpyruvate synthase regulatory protein (272 aa).

ADP is bound at residue 152–159; sequence GVSRCGKT.

The protein belongs to the pyruvate, phosphate/water dikinase regulatory protein family. PSRP subfamily.

It catalyses the reaction [pyruvate, water dikinase] + ADP = [pyruvate, water dikinase]-phosphate + AMP + H(+). The enzyme catalyses [pyruvate, water dikinase]-phosphate + phosphate + H(+) = [pyruvate, water dikinase] + diphosphate. In terms of biological role, bifunctional serine/threonine kinase and phosphorylase involved in the regulation of the phosphoenolpyruvate synthase (PEPS) by catalyzing its phosphorylation/dephosphorylation. The protein is Putative phosphoenolpyruvate synthase regulatory protein of Pseudomonas savastanoi pv. phaseolicola (strain 1448A / Race 6) (Pseudomonas syringae pv. phaseolicola (strain 1448A / Race 6)).